The following is a 614-amino-acid chain: Dihydroxy-acid dehydratase (614 aa).

Residue aspartate 81 participates in Mg(2+) binding. Cysteine 122 is a binding site for [2Fe-2S] cluster. The Mg(2+) site is built by aspartate 123 and lysine 124. N6-carboxylysine is present on lysine 124. Residue cysteine 195 participates in [2Fe-2S] cluster binding. Glutamate 491 is a binding site for Mg(2+). The Proton acceptor role is filled by serine 517.

It belongs to the IlvD/Edd family. In terms of assembly, homodimer. It depends on [2Fe-2S] cluster as a cofactor. The cofactor is Mg(2+).

It carries out the reaction (2R)-2,3-dihydroxy-3-methylbutanoate = 3-methyl-2-oxobutanoate + H2O. The enzyme catalyses (2R,3R)-2,3-dihydroxy-3-methylpentanoate = (S)-3-methyl-2-oxopentanoate + H2O. The protein operates within amino-acid biosynthesis; L-isoleucine biosynthesis; L-isoleucine from 2-oxobutanoate: step 3/4. It functions in the pathway amino-acid biosynthesis; L-valine biosynthesis; L-valine from pyruvate: step 3/4. In terms of biological role, functions in the biosynthesis of branched-chain amino acids. Catalyzes the dehydration of (2R,3R)-2,3-dihydroxy-3-methylpentanoate (2,3-dihydroxy-3-methylvalerate) into 2-oxo-3-methylpentanoate (2-oxo-3-methylvalerate) and of (2R)-2,3-dihydroxy-3-methylbutanoate (2,3-dihydroxyisovalerate) into 2-oxo-3-methylbutanoate (2-oxoisovalerate), the penultimate precursor to L-isoleucine and L-valine, respectively. The polypeptide is Dihydroxy-acid dehydratase (Rhodopseudomonas palustris (strain BisA53)).